The sequence spans 410 residues: Probable nicotinate phosphoribosyltransferase (410 aa).

Nicotinate contacts are provided by Tyr15, Phe170, and Thr220. A Phosphohistidine modification is found at His223. Thr348 serves as a coordination point for 5-phospho-alpha-D-ribose 1-diphosphate.

The protein belongs to the NAPRTase family. Requires Mg(2+) as cofactor. Mn(2+) is required as a cofactor. Post-translationally, transiently phosphorylated on a His residue during the reaction cycle. Phosphorylation strongly increases the affinity for substrates and increases the rate of nicotinate D-ribonucleotide production. Dephosphorylation regenerates the low-affinity form of the enzyme, leading to product release.

It catalyses the reaction nicotinate + 5-phospho-alpha-D-ribose 1-diphosphate + ATP + H2O = nicotinate beta-D-ribonucleotide + ADP + phosphate + diphosphate. It functions in the pathway cofactor biosynthesis; NAD(+) biosynthesis; nicotinate D-ribonucleotide from nicotinate: step 1/1. Catalyzes the first step in the biosynthesis of NAD from nicotinic acid, the ATP-dependent synthesis of beta-nicotinate D-ribonucleotide from nicotinate and 5-phospho-D-ribose 1-phosphate. Helps prevent cellular oxidative stress via its role in NAD biosynthesis. In Schizosaccharomyces pombe (strain 972 / ATCC 24843) (Fission yeast), this protein is Probable nicotinate phosphoribosyltransferase.